Reading from the N-terminus, the 496-residue chain is Squalene epoxidase ERG1 (496 aa).

The chain crosses the membrane as a helical span at residues 4-24 (VKYDAIIIGAGVIGPTIATAF). FAD is bound by residues 15-16 (VI), 35-36 (ER), R43, R148, V164, D332, and M345. Helical transmembrane passes span 431 to 451 (IGLL…FFSV) and 466 to 486 (LGFP…IVIF).

This sequence belongs to the squalene monooxygenase family. It depends on FAD as a cofactor.

It is found in the microsome membrane. The protein localises to the endoplasmic reticulum membrane. The catalysed reaction is squalene + reduced [NADPH--hemoprotein reductase] + O2 = (S)-2,3-epoxysqualene + oxidized [NADPH--hemoprotein reductase] + H2O + H(+). It functions in the pathway terpene metabolism; lanosterol biosynthesis; lanosterol from farnesyl diphosphate: step 2/3. Activity is completely abolished by Triton X-100, deoxycholate or Cu(2+), and partially inhibited by thiol reagents, rotenone and antimycin A. The allylamine antimycotic agents naftifine and SF 86-327are potent inhibitors and show apparently non-competitive kinetics with respect to the substrate squalene. In terms of biological role, squalene epoxidase; part of the third module of ergosterol biosynthesis pathway that includes the late steps of the pathway. Erg1 catalyzes the epoxidation of squalene into 2,3-epoxysqualene. The third module or late pathway involves the ergosterol synthesis itself through consecutive reactions that mainly occur in the endoplasmic reticulum (ER) membrane. Firstly, the squalene synthase ERG9 catalyzes the condensation of 2 farnesyl pyrophosphate moieties to form squalene, which is the precursor of all steroids. Squalene synthase is crucial for balancing the incorporation of farnesyl diphosphate (FPP) into sterol and nonsterol isoprene synthesis. Secondly, the squalene epoxidase ERG1 catalyzes the stereospecific oxidation of squalene to (S)-2,3-epoxysqualene, which is considered to be a rate-limiting enzyme in steroid biosynthesis. Then, the lanosterol synthase ERG7 catalyzes the cyclization of (S)-2,3 oxidosqualene to lanosterol, a reaction that forms the sterol core. In the next steps, lanosterol is transformed to zymosterol through a complex process involving various demethylation, reduction and desaturation reactions. The lanosterol 14-alpha-demethylase ERG11 (also known as CYP51) catalyzes C14-demethylation of lanosterol to produce 4,4'-dimethyl cholesta-8,14,24-triene-3-beta-ol, which is critical for ergosterol biosynthesis. The C-14 reductase ERG24 reduces the C14=C15 double bond of 4,4-dimethyl-cholesta-8,14,24-trienol to produce 4,4-dimethyl-cholesta-8,24-dienol. 4,4-dimethyl-cholesta-8,24-dienol is substrate of the C-4 demethylation complex ERG25-ERG26-ERG27 in which ERG25 catalyzes the three-step monooxygenation required for the demethylation of 4,4-dimethyl and 4alpha-methylsterols, ERG26 catalyzes the oxidative decarboxylation that results in a reduction of the 3-beta-hydroxy group at the C-3 carbon to an oxo group, and ERG27 is responsible for the reduction of the keto group on the C-3. ERG28 has a role as a scaffold to help anchor ERG25, ERG26 and ERG27 to the endoplasmic reticulum and ERG29 regulates the activity of the iron-containing C4-methylsterol oxidase ERG25. Then, the sterol 24-C-methyltransferase ERG6 catalyzes the methyl transfer from S-adenosyl-methionine to the C-24 of zymosterol to form fecosterol. The C-8 sterol isomerase ERG2 catalyzes the reaction which results in unsaturation at C-7 in the B ring of sterols and thus converts fecosterol to episterol. The sterol-C5-desaturase ERG3 then catalyzes the introduction of a C-5 double bond in the B ring to produce 5-dehydroepisterol. The C-22 sterol desaturase ERG5 further converts 5-dehydroepisterol into ergosta-5,7,22,24(28)-tetraen-3beta-ol by forming the C-22(23) double bond in the sterol side chain. Finally, ergosta-5,7,22,24(28)-tetraen-3beta-ol is substrate of the C-24(28) sterol reductase ERG4 to produce ergosterol. This is Squalene epoxidase ERG1 from Candida albicans (strain SC5314 / ATCC MYA-2876) (Yeast).